Consider the following 330-residue polypeptide: Calponin-3 (330 aa).

N6-acetyllysine is present on Lys-23. Residues 26 to 130 (QQAEEDLRNW…TLVALAGLAK (105 aa)) form the Calponin-homology (CH) domain. Lys-158 carries the post-translational modification N6-methyllysine. 3 Calponin-like repeats span residues 164–189 (IGLQMGTNKCASQAGMTAYGTRRHLY), 204–229 (ISLQMGTNKGASQAGMSAPGTRRDIY), and 243–268 (ISLQMGTNKVASQKGMSVYGLGRQVY). A disordered region spans residues 279–330 (PVIHNGSQGTGTNGSEISDSDYQAEYPDEYHGEYPDEYPREYQYGDDQGIDY). Residues 306-318 (DEYHGEYPDEYPR) show a composition bias toward basic and acidic residues.

It belongs to the calponin family.

Its function is as follows. Thin filament-associated protein that is implicated in the regulation and modulation of smooth muscle contraction. It is capable of binding to actin, calmodulin and tropomyosin. The interaction of calponin with actin inhibits the actomyosin Mg-ATPase activity. The polypeptide is Calponin-3 (Cnn3) (Rattus norvegicus (Rat)).